The following is a 549-amino-acid chain: MAAKDIRFGEDARSRMVRGVNVLANAVKATLGPKGRNVVLEKSFGAPTITKDGVSVAKEIELADKFENMGAQMVKEVASRTNDDAGDGTTTATVLAQALIREGAKAVAAGMNPMDLKRGIDKAVVAAVNELKSISKPTADDKAIAQVGTISANSDESIGQIIADAMKEVGKEGVITVEEGSGLDNELDVVKGMQFDRGYLSPYFINNQQSQTADLDDPFILLHDKKISNVRDLLPVLEGVAKAGKPLLIVAEEVEGEALATLVVNTIRGIVKVVAVKAPGFGDRRKAMLEDMAVLTGGTVISEEVGLSLEKATIKDLGRAKKVQVSKENTTIIDGVGDKAAVDSRVAQIKTQIQDTSSDYDREKLQERVAKLAGGVAVIKVGASTEIEMKEKKDRVDDALHATRAAVEEGVVPGGGVALVRAVSALAGLKGANEDQNHGIQIALRAMEAPLREIVANAGEEPSVIVNKVKEGTGSFGYNAATGEFGDMLQFGILDPTKVTRSALQNAASIAGLMITTEAMVAEAPKKDEPAMGGAGGMGGMGGMGGMDF.

ATP contacts are provided by residues T30–P33, K51, D87–T91, G415, N479–A481, and D495.

It belongs to the chaperonin (HSP60) family. In terms of assembly, forms a cylinder of 14 subunits composed of two heptameric rings stacked back-to-back. Interacts with the co-chaperonin GroES.

The protein resides in the cytoplasm. It catalyses the reaction ATP + H2O + a folded polypeptide = ADP + phosphate + an unfolded polypeptide.. In terms of biological role, together with its co-chaperonin GroES, plays an essential role in assisting protein folding. The GroEL-GroES system forms a nano-cage that allows encapsulation of the non-native substrate proteins and provides a physical environment optimized to promote and accelerate protein folding. This chain is Chaperonin GroEL, found in Stenotrophomonas maltophilia (strain R551-3).